The chain runs to 470 residues: Glucose-1-phosphate adenylyltransferase large subunit 1 (470 aa).

It belongs to the bacterial/plant glucose-1-phosphate adenylyltransferase family. Heterotetramer. Prominently expressed in the leaves and a weaker expression is seen in the tubers.

The protein resides in the plastid. The protein localises to the chloroplast. It is found in the amyloplast. It catalyses the reaction alpha-D-glucose 1-phosphate + ATP + H(+) = ADP-alpha-D-glucose + diphosphate. The protein operates within glycan biosynthesis; starch biosynthesis. Its activity is regulated as follows. Activated by 3'phosphoglycerate, inhibited by orthophosphate. Allosteric regulation. In terms of biological role, this protein plays a role in synthesis of starch. It catalyzes the synthesis of the activated glycosyl donor, ADP-glucose from Glc-1-P and ATP. This Solanum tuberosum (Potato) protein is Glucose-1-phosphate adenylyltransferase large subunit 1 (AGPS1).